A 536-amino-acid polypeptide reads, in one-letter code: MHQKILILDFGSQVTQLIARRIREAHVFCEVHPCDVTDDWVRAYARDGKLKGVILSGSHASVYEETTDKAPPAVFELGVPVLGICYGMQTMAHQLGGIVTSGHQREFGPADVRAHGHTALLEGIQDYKTAAGHGMLQVWMSHGDKVTELPHGFKLMASTDSCPIAGMADETRRFYGVQFHPEVTHTKRGAAILERFVLDICGARADWIMGDYISEAVEQIRAQVGTDEVILGLSGGVDSSVAAALIHRAIGEQLTCVFVDHGLLRLNEGDLVMEMFVGKLHAKVIRVDAADQFLGQLAGVSDPEAKRKIIGREFVEVFKAEAAKLKSDQSRHVAWLAQGTIYPDVIESGGAKNKKAVVIKSHHNVGGLPELLGLKLLEPLRELFKDEVRELGVALGLPYHMVYRHPFPGPGLGVRILGEVKKDYADLLRRADAIFIDELHNFIDEASGKSWYDLTSQAFAVFLPVKSVGVMGDGRTYDYVVALRAVQTSDFMTADWAELPYALLKKVSSRIINEVRGINRVTYDVSSKPPATIEWE.

The region spanning Lys-4–Asp-206 is the Glutamine amidotransferase type-1 domain. Catalysis depends on Cys-85, which acts as the Nucleophile. Residues His-180 and Glu-182 contribute to the active site. The GMPS ATP-PPase domain occupies Trp-207–Arg-404. ATP is bound at residue Ser-234–Ser-240.

In terms of assembly, homodimer.

It carries out the reaction XMP + L-glutamine + ATP + H2O = GMP + L-glutamate + AMP + diphosphate + 2 H(+). It functions in the pathway purine metabolism; GMP biosynthesis; GMP from XMP (L-Gln route): step 1/1. Its function is as follows. Catalyzes the synthesis of GMP from XMP. This is GMP synthase [glutamine-hydrolyzing] from Albidiferax ferrireducens (strain ATCC BAA-621 / DSM 15236 / T118) (Rhodoferax ferrireducens).